A 64-amino-acid polypeptide reads, in one-letter code: Beta-defensin 5 (64 aa).

Residues 1–22 (MRLHHLLLVLLFLVLSAGSGFT) form the signal peptide. Gln23 carries the post-translational modification Pyrrolidone carboxylic acid. 3 disulfide bridges follow: Cys31/Cys60, Cys38/Cys53, and Cys43/Cys61.

It belongs to the beta-defensin family. Neutrophilic granules. Alveolar macrophages.

It is found in the secreted. Has bactericidal activity. Active against E.coli ML35 but not against S.aureus 502A. This chain is Beta-defensin 5 (DEFB5), found in Bos taurus (Bovine).